An 821-amino-acid chain; its full sequence is DNA gyrase subunit A (821 aa).

The region spanning 35 to 500 (LPDVRDGLKP…GLETIEDEDL (466 aa)) is the Topo IIA-type catalytic domain. Y123 acts as the O-(5'-phospho-DNA)-tyrosine intermediate in catalysis. Positions 527–533 (QKRGGKG) match the GyrA-box motif.

Belongs to the type II topoisomerase GyrA/ParC subunit family. Heterotetramer, composed of two GyrA and two GyrB chains. In the heterotetramer, GyrA contains the active site tyrosine that forms a transient covalent intermediate with DNA, while GyrB binds cofactors and catalyzes ATP hydrolysis.

It localises to the cytoplasm. It carries out the reaction ATP-dependent breakage, passage and rejoining of double-stranded DNA.. In terms of biological role, a type II topoisomerase that negatively supercoils closed circular double-stranded (ds) DNA in an ATP-dependent manner to modulate DNA topology and maintain chromosomes in an underwound state. Negative supercoiling favors strand separation, and DNA replication, transcription, recombination and repair, all of which involve strand separation. Also able to catalyze the interconversion of other topological isomers of dsDNA rings, including catenanes and knotted rings. Type II topoisomerases break and join 2 DNA strands simultaneously in an ATP-dependent manner. This is DNA gyrase subunit A from Bacillus subtilis (strain 168).